A 311-amino-acid chain; its full sequence is Mediator of RNA polymerase II transcription subunit 27 (311 aa).

This sequence belongs to the Mediator complex subunit 27 family. Component of the Mediator complex.

It is found in the nucleus. In terms of biological role, component of the Mediator complex, a coactivator involved in the regulated transcription of nearly all RNA polymerase II-dependent genes. Mediator functions as a bridge to convey information from gene-specific regulatory proteins to the basal RNA polymerase II transcription machinery. Mediator is recruited to promoters by direct interactions with regulatory proteins and serves as a scaffold for the assembly of a functional preinitiation complex with RNA polymerase II and the general transcription factors. Required for the development of dopaminergic amacrine cells in the retina. May also negatively regulate the development of rod photoreceptor cells. This chain is Mediator of RNA polymerase II transcription subunit 27 (med27), found in Danio rerio (Zebrafish).